Reading from the N-terminus, the 519-residue chain is Molybdate transporter 1 (519 aa).

The next 7 helical transmembrane spans lie at 98 to 118, 164 to 184, 370 to 390, 412 to 432, 436 to 456, 464 to 484, and 485 to 505; these read LLHA…SQAI, LGTE…ATTL, AVAL…AMPC, ILLG…LVVL, FPQP…ASVV, GYTF…TGTG, and FLVG…VAAA.

This sequence belongs to the SLC26A/SulP transporter (TC 2.A.53) family.

The protein resides in the membrane. 60% inhibition by 20 uM tungstate or by lack of glucose in the medium, but no inhibition by sulfate. Functionally, high affinity molybdate transporter. Acts through an energy-dependent process. The protein is Molybdate transporter 1 (MOT1) of Chlamydomonas reinhardtii (Chlamydomonas smithii).